The sequence spans 207 residues: LexA repressor (207 aa).

The H-T-H motif DNA-binding region spans 28–48; that stretch reads RAEIASRLGFKSANAAEEHLK. Active-site for autocatalytic cleavage activity residues include Ser124 and Lys161.

This sequence belongs to the peptidase S24 family. Homodimer.

It catalyses the reaction Hydrolysis of Ala-|-Gly bond in repressor LexA.. Represses a number of genes involved in the response to DNA damage (SOS response), including recA and lexA. In the presence of single-stranded DNA, RecA interacts with LexA causing an autocatalytic cleavage which disrupts the DNA-binding part of LexA, leading to derepression of the SOS regulon and eventually DNA repair. In Shewanella amazonensis (strain ATCC BAA-1098 / SB2B), this protein is LexA repressor.